We begin with the raw amino-acid sequence, 399 residues long: Enolase (399 aa).

Residue Gln149 participates in (2R)-2-phosphoglycerate binding. The Proton donor role is filled by Glu191. Positions 227, 268, and 293 each coordinate Mg(2+). (2R)-2-phosphoglycerate contacts are provided by Lys318, Arg347, Ser348, and Lys369. The Proton acceptor role is filled by Lys318.

Belongs to the enolase family. Requires Mg(2+) as cofactor.

The protein resides in the cytoplasm. It is found in the secreted. It localises to the cell surface. It carries out the reaction (2R)-2-phosphoglycerate = phosphoenolpyruvate + H2O. Its pathway is carbohydrate degradation; glycolysis; pyruvate from D-glyceraldehyde 3-phosphate: step 4/5. Its function is as follows. Catalyzes the reversible conversion of 2-phosphoglycerate (2-PG) into phosphoenolpyruvate (PEP). It is essential for the degradation of carbohydrates via glycolysis. This Archaeoglobus fulgidus (strain ATCC 49558 / DSM 4304 / JCM 9628 / NBRC 100126 / VC-16) protein is Enolase.